The sequence spans 253 residues: Decarboxylase DEC1 (253 aa).

Lys-121 (schiff-base intermediate with acetoacetate) is an active-site residue.

It belongs to the ADC family.

The protein operates within mycotoxin biosynthesis. In terms of biological role, decarboxylase; part of the Tox1B locus, one of the 2 loci that mediate the biosynthesis of T-toxin, a family of linear polyketides 37 to 45 carbons in length, of which the major component is 41 carbons, and which leads to high virulence to maize. One of the PKSs (PKS1 or PKS2) could synthesize a precursor, used subsequently by the other PKS as starter unit, to add additional carbons. Variability in the length of the final carbon backbone C35-47 could be achieved by varying the number of condensation cycles, or use of different starter or extender units or might be due to decarboxylation of the penultimate product, catalyzed by DEC1. Additional proteins are required for the biosynthesis of T-toxin, including oxidoreductases RED1, RED2, RED3, LAM1 and OXI1, as well as esterase TOX9. This chain is Decarboxylase DEC1, found in Cochliobolus heterostrophus (strain C4 / ATCC 48331 / race T) (Southern corn leaf blight fungus).